The chain runs to 668 residues: Transketolase (668 aa).

His-28 provides a ligand contact to substrate. Thiamine diphosphate is bound by residues His-68 and 116 to 118 (GPL). Asp-157 serves as a coordination point for Mg(2+). Thiamine diphosphate-binding residues include Gly-158 and Asn-187. The Mg(2+) site is built by Asn-187 and Ile-189. 3 residues coordinate substrate: His-263, Arg-358, and Ser-385. Residue His-263 coordinates thiamine diphosphate. The Proton donor role is filled by Glu-412. Position 438 (Phe-438) interacts with thiamine diphosphate. Substrate-binding residues include His-462, Asp-470, His-474, and Arg-521.

It belongs to the transketolase family. In terms of assembly, homodimer. Requires Mg(2+) as cofactor. It depends on thiamine diphosphate as a cofactor.

It catalyses the reaction D-sedoheptulose 7-phosphate + D-glyceraldehyde 3-phosphate = aldehydo-D-ribose 5-phosphate + D-xylulose 5-phosphate. Functionally, catalyzes the transfer of a two-carbon ketol group from a ketose donor to an aldose acceptor, likely via a covalent intermediate with the cofactor thiamine pyrophosphate. Can use L-erythrulose as donor and D-ribose-5-phosphate as acceptor substrates, forming glycolaldehyde and D-sedoheptulose-7-phosphate. For synthetic purposes, is able to use hydroxypyruvate (HPA) as donor substrate, making the reaction irreversible due to the release of carbon dioxide, and various aldehydes as acceptor substrates, which leads to the corresponding ketoses. Thus, using hydroxypyruvate as donor and three different aldehydes as acceptors, i.e. glycolaldehyde, D-glyceraldehyde and butyraldehyde, the enzyme stereoselectively forms the corresponding products L-erythrulose, D-xylulose and (3S)-1,3-dihydroxyhexan-2-one, respectively. The polypeptide is Transketolase (Geobacillus stearothermophilus (Bacillus stearothermophilus)).